A 147-amino-acid polypeptide reads, in one-letter code: uncharacterized protein (147 aa).

The HTH LytTR-type domain occupies 44 to 147; that stretch reads LVGYIDKEIH…LKSIKERLSI (104 aa).

The protein resides in the cytoplasm. This is an uncharacterized protein from Staphylococcus aureus (strain bovine RF122 / ET3-1).